The following is a 628-amino-acid chain: MVDSKTPAKTKLLDSSSISNVRVVLRVRPFLPREISDESCDGRSCVSVIGGDGGDTSEVAVYLKDPDSCRNESYQLDAFYGREDDNVKHIFDREVSPLIPGIFHGFNATVLAYGATGSGKTFTMQGIDELPGLMPLTMSTILSMCEKTRSRAEISYYEVYMDRCWDLLEVKDNEIAVWDDKDGQVHLKGLSSVPVKSMSEFQEAYLCGVQRRKVAHTGLNDVSSRSHGVLVISVTSQGLVTGKINLIDLAGNEDNRRTGNEGIRLQESAKINQSLFALSNVVYALNNNLPRVPYRETKLTRILQDSLGGTSRALMVACLNPGEYQESLRTVSLAARSRHISNNVSLNPKVETPKVKIDMEAKLQAWLESKGKMKSAHRMMAIRSPLMGTNQTSISQSSVKKLLCHRSAIAESAKLAGTGQRDAFVTARNLFGVETLAASHLWEPIRNLQLASPTKEDERDTSGEENLLVSEASLRDNTLDVEKKYTELSPLREALSPIDSNAKPNSAHGSSPFLKPMTPKTPFLSTNPEIMQMEGTCQKFNAWSNNLKTSLIKEYIHFLNTANREELRELKGIGQKMAEYIIELRETSPLKSLTDLEKIGFTSRQVHNLFKKATEGVLEKPVSASTTP.

The region spanning Asn20–Ile340 is the Kinesin motor domain. Gly114–Thr121 contributes to the ATP binding site. A disordered region spans residues Ser496–Pro519. Residues Ile498–Gly509 are compositionally biased toward polar residues.

The protein belongs to the TRAFAC class myosin-kinesin ATPase superfamily. Kinesin family. KIN-10 subfamily.

This is Kinesin-like protein KIN-10B from Arabidopsis thaliana (Mouse-ear cress).